The following is a 414-amino-acid chain: 2,3-diketo-5-methylthiopentyl-1-phosphate enolase (414 aa).

Lysine 99 functions as the Proton acceptor in the catalytic mechanism. Substrate-binding positions include lysine 148, lysine 174–glutamate 177, histidine 265, glycine 338, and glycine 360–glycine 361. Mg(2+) contacts are provided by lysine 174, aspartate 176, and glutamate 177. Lysine 174 bears the N6-carboxylysine mark.

Belongs to the RuBisCO large chain family. Type IV subfamily. In terms of assembly, homodimer. Requires Mg(2+) as cofactor.

It catalyses the reaction 5-methylsulfanyl-2,3-dioxopentyl phosphate = 2-hydroxy-5-methylsulfanyl-3-oxopent-1-enyl phosphate. It functions in the pathway amino-acid biosynthesis; L-methionine biosynthesis via salvage pathway; L-methionine from S-methyl-5-thio-alpha-D-ribose 1-phosphate: step 3/6. Catalyzes the enolization of 2,3-diketo-5-methylthiopentyl-1-phosphate (DK-MTP-1-P) into 2-hydroxy-3-keto-5-methylthiopentenyl-1-phosphate (HK-MTPenyl-1-P). The protein is 2,3-diketo-5-methylthiopentyl-1-phosphate enolase of Bacillus cereus (strain AH820).